Here is a 293-residue protein sequence, read N- to C-terminus: Protease HtpX homolog (293 aa).

2 helical membrane-spanning segments follow: residues 6–26 (VAVMLAAMTGLFLAVGYLIGG) and 28–48 (SGMVIAFLVAGGMNLFAYWNS). His130 is a Zn(2+) binding site. Residue Glu131 is part of the active site. Residue His134 participates in Zn(2+) binding. A run of 2 helical transmembrane segments spans residues 145–165 (LTATLAGAISMLANFAFFFGG) and 172–192 (PLGAVGMIVMMILAPLAAMMV). Position 201 (Glu201) interacts with Zn(2+).

The protein belongs to the peptidase M48B family. Zn(2+) is required as a cofactor.

The protein resides in the cell inner membrane. This Rhodospirillum rubrum (strain ATCC 11170 / ATH 1.1.1 / DSM 467 / LMG 4362 / NCIMB 8255 / S1) protein is Protease HtpX homolog.